Reading from the N-terminus, the 150-residue chain is Large ribosomal subunit protein eL19 (150 aa).

Residues 56-90 (RGISSGRLKERKHKRRSKGEGRKHGSRKGKSGART) form a disordered region.

It belongs to the eukaryotic ribosomal protein eL19 family. Part of the 50S ribosomal subunit.

Its function is as follows. Binds to the 23S rRNA. The polypeptide is Large ribosomal subunit protein eL19 (Sulfolobus acidocaldarius (strain ATCC 33909 / DSM 639 / JCM 8929 / NBRC 15157 / NCIMB 11770)).